The sequence spans 339 residues: Homeobox protein Hox-D13 (339 aa).

Positions 1–33 (MSRSGTWDMDGLRADGGAAGAAPASSSSSVAAP) are disordered. Low complexity predominate over residues 20 to 33 (GAAPASSSSSVAAP). A DNA-binding region (homeobox) is located at residues 272 to 331 (GRKKRVPYTKLQLKELENEYAINKFINKDKRRRISAATNLSERQVTIWFQNRRVKDKKIV).

This sequence belongs to the Abd-B homeobox family.

Its subcellular location is the nucleus. In terms of biological role, sequence-specific transcription factor that binds gene promoters and activates their transcription. Part of a developmental regulatory system that provides cells with specific positional identities on the anterior-posterior axis. The chain is Homeobox protein Hox-D13 (Hoxd13) from Mus musculus (Mouse).